The chain runs to 288 residues: Small ribosomal subunit protein uS2 (288 aa).

Positions 259 to 276 (EAAPAAEEAPAAEAEAAA) are enriched in low complexity. Positions 259–288 (EAAPAAEEAPAAEAEAAATDTSSESDKTEA) are disordered.

The protein belongs to the universal ribosomal protein uS2 family.

This Maricaulis maris (strain MCS10) (Caulobacter maris) protein is Small ribosomal subunit protein uS2.